A 228-amino-acid chain; its full sequence is Cytochrome c oxidase subunit 2 (228 aa).

At 1–14 (MAYPLQLGFQDATS) the chain is on the mitochondrial intermembrane side. Residues 15-45 (PVMEELLHFHDHTLMIIFLISSLVLYIIMLM) traverse the membrane as a helical segment. Residues 46 to 59 (LTSKLVHTNMMNVQ) lie on the Mitochondrial matrix side of the membrane. A helical transmembrane segment spans residues 60–87 (EMEMIWTILPAIILILIALPSLHTLYMM). Over 88–228 (DEINNPLLTI…FENWSASLAQ (141 aa)) the chain is Mitochondrial intermembrane. Cu cation is bound by residues H161, C196, E198, C200, H204, and M207. E198 provides a ligand contact to Mg(2+). Y218 is subject to Phosphotyrosine.

This sequence belongs to the cytochrome c oxidase subunit 2 family. Component of the cytochrome c oxidase (complex IV, CIV), a multisubunit enzyme composed of 14 subunits. The complex is composed of a catalytic core of 3 subunits MT-CO1, MT-CO2 and MT-CO3, encoded in the mitochondrial DNA, and 11 supernumerary subunits COX4I, COX5A, COX5B, COX6A, COX6B, COX6C, COX7A, COX7B, COX7C, COX8 and NDUFA4, which are encoded in the nuclear genome. The complex exists as a monomer or a dimer and forms supercomplexes (SCs) in the inner mitochondrial membrane with NADH-ubiquinone oxidoreductase (complex I, CI) and ubiquinol-cytochrome c oxidoreductase (cytochrome b-c1 complex, complex III, CIII), resulting in different assemblies (supercomplex SCI(1)III(2)IV(1) and megacomplex MCI(2)III(2)IV(2)). Found in a complex with TMEM177, COA6, COX18, COX20, SCO1 and SCO2. Interacts with TMEM177 in a COX20-dependent manner. Interacts with COX20. Interacts with COX16. Requires Cu cation as cofactor.

The protein localises to the mitochondrion inner membrane. The catalysed reaction is 4 Fe(II)-[cytochrome c] + O2 + 8 H(+)(in) = 4 Fe(III)-[cytochrome c] + 2 H2O + 4 H(+)(out). Functionally, component of the cytochrome c oxidase, the last enzyme in the mitochondrial electron transport chain which drives oxidative phosphorylation. The respiratory chain contains 3 multisubunit complexes succinate dehydrogenase (complex II, CII), ubiquinol-cytochrome c oxidoreductase (cytochrome b-c1 complex, complex III, CIII) and cytochrome c oxidase (complex IV, CIV), that cooperate to transfer electrons derived from NADH and succinate to molecular oxygen, creating an electrochemical gradient over the inner membrane that drives transmembrane transport and the ATP synthase. Cytochrome c oxidase is the component of the respiratory chain that catalyzes the reduction of oxygen to water. Electrons originating from reduced cytochrome c in the intermembrane space (IMS) are transferred via the dinuclear copper A center (CU(A)) of subunit 2 and heme A of subunit 1 to the active site in subunit 1, a binuclear center (BNC) formed by heme A3 and copper B (CU(B)). The BNC reduces molecular oxygen to 2 water molecules using 4 electrons from cytochrome c in the IMS and 4 protons from the mitochondrial matrix. The chain is Cytochrome c oxidase subunit 2 (MT-CO2) from Loxodonta africana (African elephant).